The primary structure comprises 360 residues: Small ribosomal subunit protein mS22 (360 aa).

Serine 54 carries the post-translational modification Phosphoserine. Lysine 211 is subject to N6-acetyllysine.

Belongs to the mitochondrion-specific ribosomal protein mS22 family. As to quaternary structure, component of the mitochondrial small ribosomal subunit (mt-SSU). Mature mammalian 55S mitochondrial ribosomes consist of a small (28S) and a large (39S) subunit. The 28S small subunit contains a 12S ribosomal RNA (12S mt-rRNA) and 30 different proteins. The 39S large subunit contains a 16S rRNA (16S mt-rRNA), a copy of mitochondrial valine transfer RNA (mt-tRNA(Val)), which plays an integral structural role, and 52 different proteins.

It is found in the mitochondrion. In Homo sapiens (Human), this protein is Small ribosomal subunit protein mS22 (MRPS22).